We begin with the raw amino-acid sequence, 160 residues long: Large ribosomal subunit protein uL13 (160 aa).

The protein belongs to the universal ribosomal protein uL13 family. Part of the 50S ribosomal subunit.

Functionally, this protein is one of the early assembly proteins of the 50S ribosomal subunit, although it is not seen to bind rRNA by itself. It is important during the early stages of 50S assembly. In Orientia tsutsugamushi (strain Ikeda) (Rickettsia tsutsugamushi), this protein is Large ribosomal subunit protein uL13.